Here is a 664-residue protein sequence, read N- to C-terminus: Fructose-1,6-bisphosphatase class 3 (664 aa).

It belongs to the FBPase class 3 family. Mn(2+) serves as cofactor.

The enzyme catalyses beta-D-fructose 1,6-bisphosphate + H2O = beta-D-fructose 6-phosphate + phosphate. It participates in carbohydrate biosynthesis; gluconeogenesis. This Bacteroides fragilis (strain YCH46) protein is Fructose-1,6-bisphosphatase class 3.